The sequence spans 395 residues: Protein SGT1 (395 aa).

Lys32 participates in a covalent cross-link: Glycyl lysine isopeptide (Lys-Gly) (interchain with G-Cter in ubiquitin). The segment at 137 to 175 is disordered; that stretch reads KKNKKQKDSTNKHTIKPVESIENRGDNNSSHSPISPLKI. A phosphoserine mark is found at Ser168 and Ser171. The region spanning 182–277 is the CS domain; the sequence is SPKFKIDWYQ…IDSTQWKKLE (96 aa). The SGS domain maps to 312 to 395; the sequence is SYPSSSKKKI…PPEGMEPKHW (84 aa). A disordered region spans residues 373 to 395; the sequence is DWEDVSKGTVKTSPPEGMEPKHW.

It belongs to the SGT1 family. As to quaternary structure, interacts with SKP1/CBF3D. Part of SCF E3 ubiquitin ligase complexes containing SKP1, CDC53, HRT1 and some F-box proteins. Interacts with CIR1/CDC35.

Its function is as follows. Involved in ubiquitination and subsequent proteasomal degradation of target proteins. Required for both entry into S phase and kinetochore function. Also involved in cyclic AMP (cAMP) pathway, possibly by participating in the assembly or the conformational activation of specific multiprotein complexes. This Saccharomyces cerevisiae (strain ATCC 204508 / S288c) (Baker's yeast) protein is Protein SGT1.